Reading from the N-terminus, the 102-residue chain is PqqA binding protein (102 aa).

It belongs to the PqqD family. In terms of assembly, monomer. Interacts with PqqE.

The protein operates within cofactor biosynthesis; pyrroloquinoline quinone biosynthesis. Functions as a PqqA binding protein and presents PqqA to PqqE, in the pyrroloquinoline quinone (PQQ) biosynthetic pathway. This Rhodopseudomonas palustris (strain HaA2) protein is PqqA binding protein.